The sequence spans 304 residues: Dihydroorotate dehydrogenase B (NAD(+)), catalytic subunit (304 aa).

FMN contacts are provided by residues serine 21 and lysine 45–alanine 46. Substrate-binding positions include lysine 45 and asparagine 69–leucine 73. Asparagine 99 and asparagine 127 together coordinate FMN. Asparagine 127 contributes to the substrate binding site. Cysteine 130 serves as the catalytic Nucleophile. FMN contacts are provided by lysine 165 and isoleucine 191. A substrate-binding site is contributed by asparagine 192–threonine 193. Residues glycine 217, glycine 243–glycine 244, and glycine 265–threonine 266 contribute to the FMN site.

The protein belongs to the dihydroorotate dehydrogenase family. Type 1 subfamily. In terms of assembly, heterotetramer of 2 PyrK and 2 PyrD type B subunits. Requires FMN as cofactor.

The protein localises to the cytoplasm. The enzyme catalyses (S)-dihydroorotate + NAD(+) = orotate + NADH + H(+). Its pathway is pyrimidine metabolism; UMP biosynthesis via de novo pathway; orotate from (S)-dihydroorotate (NAD(+) route): step 1/1. Catalyzes the conversion of dihydroorotate to orotate with NAD(+) as electron acceptor. The polypeptide is Dihydroorotate dehydrogenase B (NAD(+)), catalytic subunit (pyrD) (Listeria monocytogenes serovar 1/2a (strain ATCC BAA-679 / EGD-e)).